A 443-amino-acid polypeptide reads, in one-letter code: Phosphoglucosamine mutase (443 aa).

Ser-101 serves as the catalytic Phosphoserine intermediate. The Mg(2+) site is built by Ser-101, Asp-239, Asp-241, and Asp-243. Residue Ser-101 is modified to Phosphoserine.

This sequence belongs to the phosphohexose mutase family. Requires Mg(2+) as cofactor. Activated by phosphorylation.

It carries out the reaction alpha-D-glucosamine 1-phosphate = D-glucosamine 6-phosphate. Catalyzes the conversion of glucosamine-6-phosphate to glucosamine-1-phosphate. This Francisella tularensis subsp. novicida (strain U112) protein is Phosphoglucosamine mutase.